We begin with the raw amino-acid sequence, 103 residues long: Stefin-2 (103 aa).

A Secondary area of contact motif is present at residues 52–56; it reads QVVQG.

This sequence belongs to the cystatin family.

Its subcellular location is the cytoplasm. This is an intracellular thiol proteinase inhibitor. The polypeptide is Stefin-2 (Stfa2) (Mus musculus (Mouse)).